Here is a 526-residue protein sequence, read N- to C-terminus: Putative ankyrin repeat protein R840 (526 aa).

ANK repeat units follow at residues 78–107, 108–137, 139–167, 169–197, 198–227, 229–255, 256–285, 286–315, 317–345, 346–375, 376–405, 406–435, 437–467, 468–497, and 499–526; these read TLNECLFISCKRGRNDFVKYFVSKGANIRS, RDNFAIKLACEHGHIEVVKYLIDNGVDIRS, KNYAVRIACNNGHIDIVKLLISKGANIRD, DNCAIKWASENGHIEIVKILVSQGYDSTS, NFNEPVILAVKNGHLEVVKYLVSQSDRCRN, SAIISAAENGHIEIVKFLASRGSNIRI, DDDYTIRIASGNGHLEVVKFLVSKGCNIRS, EIDHAVQWASTNGHLEVVEYLVSQGADIKS, YDRSVRCASQNGHIEVVKYLVSQGANIRN, INDYAVRYASENGHIEVVEYLVSQGANIRV, DNDSPLLRACLKGHIKVVKFLVSSGADIRV, NNYQPLLIAAGNGHLEILKYLVSQGVNVSI, NVPLVGIACIDGYGYFEIVKYLVSIGADINL, ADDMAIRLASEYGHLDIVKYLVENGANVRA, and NDYAIKQAHRKGHQEVVNYLLSKGAILS.

The chain is Putative ankyrin repeat protein R840 from Acanthamoeba polyphaga (Amoeba).